The following is a 109-amino-acid chain: Death-associated protein-like 1 homolog (109 aa).

2 disordered regions span residues 1–51 (MVQL…KPRS) and 76–100 (FPET…ISRI). A compositionally biased stretch (basic and acidic residues) spans 31-50 (KSADENANVEKETRKTDKPR).

This sequence belongs to the DAP-DAPL1 family. In terms of assembly, associates with ribosomes; preventing translation. Interacts with eiF5a (eif5a and eif5a2); preventing translation.

Ribosome-binding protein that promotes ribosome hibernation, a process during which ribosomes are stabilized in an inactive state and preserved from proteasomal degradation. Acts via its association with eiF5a (eif5a and eif5a2) at the polypeptide exit tunnel of the ribosome, preventing mRNA translation. Plays a key role in ribosome hibernation in the mature egg by preventing mRNA translation, leading to ribosome inactivation. Ribosomes, which are produced in large quantities during oogenesis, are stored and translationally repressed in the egg and early embryo. The polypeptide is Death-associated protein-like 1 homolog (Danio rerio (Zebrafish)).